The sequence spans 311 residues: Olfactory receptor 1N1 (311 aa).

Topologically, residues 1 to 23 (MENQSSISEFFLRGISAPPEQQQ) are extracellular. An N-linked (GlcNAc...) asparagine glycan is attached at N3. A helical transmembrane segment spans residues 24–47 (SLFGIFLCMYLVTLTGNLLIILAI). Over 48-55 (GSDLHLHT) the chain is Cytoplasmic. Residues 56-77 (PMYFFLANLSFVDMGLTSSTVT) traverse the membrane as a helical segment. The Extracellular segment spans residues 78 to 98 (KMLVNIQTRHHTISYTGCLTQ). The cysteines at positions 95 and 187 are disulfide-linked. A helical membrane pass occupies residues 99-118 (MYFFLMFGDLDSFFLAAMAY). The Cytoplasmic portion of the chain corresponds to 119-137 (DRYVAICHPLCYSTVMRPQ). A helical membrane pass occupies residues 138–156 (VCALMLALCWVLTNIVALT). Residues 157 to 194 (HTFLMARLSFCVTGEIAHFFCDITPVLKLSCSDTHINE) lie on the Extracellular side of the membrane. A helical transmembrane segment spans residues 195–217 (MMVFVLGGTVLIVPFLCIVTSYI). Over 218–234 (HIVPAILRVRTRGGVGK) the chain is Cytoplasmic. Residues 235-257 (AFSTCSSHLCVVCVFYGTLFSAY) form a helical membrane-spanning segment. Residues 258 to 270 (LCPPSIASEEKDI) lie on the Extracellular side of the membrane. The helical transmembrane segment at 271 to 290 (AAAAMYTIVTPMLNPFIYSL) threads the bilayer. The Cytoplasmic segment spans residues 291–311 (RNKDMKGALKRLFSHRSIVSS).

This sequence belongs to the G-protein coupled receptor 1 family.

It is found in the cell membrane. Its function is as follows. Odorant receptor. The sequence is that of Olfactory receptor 1N1 (OR1N1) from Homo sapiens (Human).